Consider the following 622-residue polypeptide: MENARRLLVLALGSVGVVYGDIGTSPLYAFREALRPVSHDGVTDVEIIGLISLMIWALTIIVTIKYVLFLLRADNQGEGGTLSLLALLMKTANGHTAILFFMGIAGAALFIGDAMITPALSVLSAVEGLKLVTPALSDYVVPIAVVILLLLFTVQSKGTAAVSNFFGPITLIWFVVMGTIGFVHIADDLSIFRAFNPYYAASFLFNEGYVGIVVLGAVFLTVTGAEALYADLGHFGRRPIQWAWFTVVFPALTLNYLGQGAFVLKNPEAMSDPFFLMFPKWALLPAVILATAATIIASQAVITGAFSLTRQAIHLGFLPRMAIFHTSETHTGQIYLPNVNTLLMFGVMALVFLFGSSEALATAYGISVTGAMVVTTVLSFEFLRMRWNWPTWWAAGALLPLFVLEFVFLGANMLKIHDGGYVPILIAATFIVIMWTWKRGTAILHAKTRHIDIPLASFIKSVERQSEHAPVSVTGTAIFLTSDPESTPAALLHNIKHNHVLHQQNFILTIRTANTPKVPKEERVSVRRLSERFTLLEMKFGFMETQNVSQALGLFRKSGLKFDIMSTSFYLGRRKLVPDAQSGMPHWQDRLFIALANAAIDPSDYFRLPTNRVVELGSHVII.

The next 12 membrane-spanning stretches (helical) occupy residues L7 to L27, L50 to L70, T96 to I116, V132 to F152, F165 to I185, V210 to A230, W244 to L264, A282 to I302, I334 to F354, L360 to F380, T391 to A411, and I416 to T436.

This sequence belongs to the HAK/KUP transporter (TC 2.A.72) family.

The protein resides in the cell inner membrane. It catalyses the reaction K(+)(in) + H(+)(in) = K(+)(out) + H(+)(out). In terms of biological role, transport of potassium into the cell. Likely operates as a K(+):H(+) symporter. The sequence is that of Probable potassium transport system protein Kup 1 from Rhizobium meliloti (strain 1021) (Ensifer meliloti).